We begin with the raw amino-acid sequence, 110 residues long: uncharacterized protein (110 aa).

This is an uncharacterized protein from Enterobacteria phage T4 (Bacteriophage T4).